We begin with the raw amino-acid sequence, 301 residues long: Hydroxymethylglutaryl-CoA lyase (301 aa).

The Pyruvate carboxyltransferase domain occupies 4-271; the sequence is VKVFEVGPRD…STGVDLEAVA (268 aa). R12 serves as a coordination point for substrate. Residues D13, H204, and H206 each contribute to the a divalent metal cation site. Residue C237 is part of the active site. N246 lines the a divalent metal cation pocket.

It belongs to the HMG-CoA lyase family.

It carries out the reaction (3S)-3-hydroxy-3-methylglutaryl-CoA = acetoacetate + acetyl-CoA. Its pathway is metabolic intermediate metabolism; (S)-3-hydroxy-3-methylglutaryl-CoA degradation; acetoacetate from (S)-3-hydroxy-3-methylglutaryl-CoA: step 1/1. In terms of biological role, involved in the catabolism of branched amino acids such as leucine. This chain is Hydroxymethylglutaryl-CoA lyase (mvaB), found in Pseudomonas mevalonii.